The sequence spans 420 residues: MVSRQEQFEQVQAVKKSINTASEEVKNQALLAMADHLVAATEEILAANALDMAAAKGKISDVMLDRLYLDADRIEAMARGIREVVALPDPIGEVLETSQLENGLVITKKRVAMGVIGIIYESRPNVTSDAAALTLKSGNAVVLRSGKDAYQTTHAIVTALKKGLETTTIHPNVIQLVEDTSRESSYAMMKAKGYLDLLIPRGGAGLINAVVENAIVPVIETGTGIVHVYVDKDADEDKALSIINNAKTSRPSVCNAMEILLVHENKAASILPRLDQMLVAERKEAGLEPIQFRLDSKASQFVSGQAAETQDFDTEFLDYVLAVKVVSSLEEAVAHIESHSTHHSDAIVTENAEAAAYFTDQVDSAAVYVNASTRFTDGGQFGLGCEMGISTQKLHARGPMGLKELTSYKYVVAGDGQIRE.

This sequence belongs to the gamma-glutamyl phosphate reductase family.

The protein localises to the cytoplasm. The enzyme catalyses L-glutamate 5-semialdehyde + phosphate + NADP(+) = L-glutamyl 5-phosphate + NADPH + H(+). It participates in amino-acid biosynthesis; L-proline biosynthesis; L-glutamate 5-semialdehyde from L-glutamate: step 2/2. Catalyzes the NADPH-dependent reduction of L-glutamate 5-phosphate into L-glutamate 5-semialdehyde and phosphate. The product spontaneously undergoes cyclization to form 1-pyrroline-5-carboxylate. In Streptococcus pneumoniae (strain 70585), this protein is Gamma-glutamyl phosphate reductase.